A 360-amino-acid polypeptide reads, in one-letter code: Phospho-N-acetylmuramoyl-pentapeptide-transferase (360 aa).

The Periplasmic portion of the chain corresponds to 1–25 (MLVWLAEHLVKYYSGFNVFSYLTFR). A helical membrane pass occupies residues 26-46 (AIVSLLTALFISLWMGPRMIA). Residues 47–71 (RLQKLSFGQVVRNDGPESHFSKRGT) lie on the Cytoplasmic side of the membrane. A helical transmembrane segment spans residues 72 to 92 (PTMGGIMILTSIVISVLLWAY). A topological domain (periplasmic) is located at residue Pro93. The helical transmembrane segment at 94-114 (SNPYVWCVLVVLIGYGIIGFV) threads the bilayer. Residues 115-131 (DDYRKVVRKDTKGLIAR) lie on the Cytoplasmic side of the membrane. The chain crosses the membrane as a helical span at residues 132-152 (WKYFWMSVIALGVAFALYLVG). The Periplasmic portion of the chain corresponds to 153 to 167 (KDTPATQLVVPFFKD). The helical transmembrane segment at 168 to 188 (VMPQLGLFYILLSYFVIVGTG) threads the bilayer. Residues 189–198 (NAVNLTDGLD) are Cytoplasmic-facing. Residues 199-219 (GLAIMPTVFVAAGFALVAWAT) form a helical membrane-spanning segment. Residues 220–235 (GNMNFANYLHIPYLRH) lie on the Periplasmic side of the membrane. A helical transmembrane segment spans residues 236 to 256 (AGELVIVCTAIVGAGLGFLWF). Topologically, residues 257–262 (NTYPAQ) are cytoplasmic. Residues 263-283 (VFMGDVGSLALGGALGIIAVL) traverse the membrane as a helical segment. The Periplasmic portion of the chain corresponds to 284–287 (LRQE). Residues 288-308 (FLLVIMGGVFVVETLSVILQV) form a helical membrane-spanning segment. Residues 309–337 (GSFKLRGQRIFRMAPIHHHYELKGWPEPR) lie on the Cytoplasmic side of the membrane. A helical membrane pass occupies residues 338 to 358 (VIVRFWIISLMLVLIGLATLK). Residues 359-360 (VR) are Periplasmic-facing.

Belongs to the glycosyltransferase 4 family. MraY subfamily. The cofactor is Mg(2+).

Its subcellular location is the cell inner membrane. It carries out the reaction UDP-N-acetyl-alpha-D-muramoyl-L-alanyl-gamma-D-glutamyl-meso-2,6-diaminopimeloyl-D-alanyl-D-alanine + di-trans,octa-cis-undecaprenyl phosphate = di-trans,octa-cis-undecaprenyl diphospho-N-acetyl-alpha-D-muramoyl-L-alanyl-D-glutamyl-meso-2,6-diaminopimeloyl-D-alanyl-D-alanine + UMP. It functions in the pathway cell wall biogenesis; peptidoglycan biosynthesis. In terms of biological role, catalyzes the initial step of the lipid cycle reactions in the biosynthesis of the cell wall peptidoglycan: transfers peptidoglycan precursor phospho-MurNAc-pentapeptide from UDP-MurNAc-pentapeptide onto the lipid carrier undecaprenyl phosphate, yielding undecaprenyl-pyrophosphoryl-MurNAc-pentapeptide, known as lipid I. The chain is Phospho-N-acetylmuramoyl-pentapeptide-transferase from Salmonella gallinarum (strain 287/91 / NCTC 13346).